The following is a 1088-amino-acid chain: Neural cell adhesion molecule 1-A (1088 aa).

The first 19 residues, 1–19 (MLHIKDLIWTLYFIGTAVA), serve as a signal peptide directing secretion. Ig-like C2-type domains lie at 20-108 (LEVN…GTVN), 113-202 (QKLT…KDIQ), 209-294 (PTIQ…AEAT), 303-397 (PKIT…FEVQ), and 400-484 (PKIR…HEFS). Topologically, residues 20 to 705 (LEVNIVPDQG…TASAGTGLGT (686 aa)) are extracellular. 2 disulfides stabilise this stretch: cysteine 41–cysteine 93 and cysteine 136–cysteine 186. Asparagine 82 is a glycosylation site (N-linked (GlcNAc...) asparagine). Heparin is bound by residues 149 to 153 (RHKGK) and 158 to 162 (KKDVR). Residue asparagine 219 is glycosylated (N-linked (GlcNAc...) asparagine). Cysteines 232 and 282 form a disulfide. Asparagine 310, asparagine 341, asparagine 417, asparagine 443, and asparagine 472 each carry an N-linked (GlcNAc...) asparagine glycan. An intrachain disulfide couples cysteine 323 to cysteine 379. An intrachain disulfide couples cysteine 420 to cysteine 473. Fibronectin type-III domains follow at residues 493-592 (TPSS…TQPV) and 594-690 (EPSA…TAKP). The helical transmembrane segment at 706-723 (GAIVGILIVIFVLLLVVV) threads the bilayer. Over 724 to 1088 (DVTCFFLNKC…TQTNANESKA (365 aa)) the chain is Cytoplasmic. The span at 758 to 784 (EGKAAFSKDESKEPIVEVRTEEERTPN) shows a compositional bias: basic and acidic residues. Disordered stretches follow at residues 758–802 (EGKA…LTEP), 829–1000 (FATA…DGGT), and 1024–1088 (VASG…ESKA). Low complexity-rich tracts occupy residues 835 to 847 (SPTS…TSST), 854 to 875 (APDS…APTT), and 913 to 936 (PSAA…VPPN). The segment covering 965–974 (QPSTVKNPTE) has biased composition (polar residues). A compositionally biased stretch (basic and acidic residues) spans 1046 to 1064 (AKTEKTQVEEKSKPEEIDV). Polar residues predominate over residues 1076-1088 (NEATQTNANESKA).

Polysialylated by ST8SIA2 and ST8SIA4. Polysialylation modulates cell interactions by confering both attractive and repulsive properties that are highly regulated by ST8SIA2 and ST8SIA4. Polysialylation is formed on a-2,3-linked sialic acid of core glycans. In terms of tissue distribution, expressed in neuron and in presumptive neural tissue.

The protein resides in the cell membrane. Its function is as follows. This protein is a cell adhesion molecule involved in neuron-neuron adhesion, neurite fasciculation, outgrowth of neurites, etc. The polypeptide is Neural cell adhesion molecule 1-A (Xenopus laevis (African clawed frog)).